Consider the following 213-residue polypeptide: 3-demethoxyubiquinol 3-hydroxylase (213 aa).

Fe cation contacts are provided by Glu-62, Glu-92, His-95, Glu-144, Glu-176, and His-179.

It belongs to the COQ7 family. Requires Fe cation as cofactor.

It is found in the cell membrane. The enzyme catalyses a 5-methoxy-2-methyl-3-(all-trans-polyprenyl)benzene-1,4-diol + AH2 + O2 = a 3-demethylubiquinol + A + H2O. The protein operates within cofactor biosynthesis; ubiquinone biosynthesis. Its function is as follows. Catalyzes the hydroxylation of 2-nonaprenyl-3-methyl-6-methoxy-1,4-benzoquinol during ubiquinone biosynthesis. This is 3-demethoxyubiquinol 3-hydroxylase from Legionella pneumophila (strain Corby).